We begin with the raw amino-acid sequence, 325 residues long: Short chain isoprenyl diphosphate synthase (325 aa).

Residues K44, R47, and H76 each contribute to the isopentenyl diphosphate site. The Mg(2+) site is built by D83 and D87. An all-trans-polyprenyl diphosphate is bound at residue R92. R93 contributes to the isopentenyl diphosphate binding site. Positions 173, 174, 211, 228, and 238 each coordinate an all-trans-polyprenyl diphosphate.

Belongs to the FPP/GGPP synthase family. Homodimer. Mg(2+) is required as a cofactor.

It localises to the cytoplasm. In Methanothermobacter thermautotrophicus (strain ATCC 29096 / DSM 1053 / JCM 10044 / NBRC 100330 / Delta H) (Methanobacterium thermoautotrophicum), this protein is Short chain isoprenyl diphosphate synthase (idsA).